A 230-amino-acid chain; its full sequence is Uracil-DNA glycosylase (230 aa).

Catalysis depends on Asp-71, which acts as the Proton acceptor.

Belongs to the uracil-DNA glycosylase (UDG) superfamily. UNG family.

The protein localises to the cytoplasm. It carries out the reaction Hydrolyzes single-stranded DNA or mismatched double-stranded DNA and polynucleotides, releasing free uracil.. Functionally, excises uracil residues from the DNA which can arise as a result of misincorporation of dUMP residues by DNA polymerase or due to deamination of cytosine. This Tropheryma whipplei (strain TW08/27) (Whipple's bacillus) protein is Uracil-DNA glycosylase.